Reading from the N-terminus, the 568-residue chain is Cytosolic purine 5'-nucleotidase (568 aa).

Catalysis depends on Asp-52, which acts as the Nucleophile. The IMP site is built by Asp-52 and Asp-54. Mg(2+) contacts are provided by Asp-52 and Asp-54. Asp-54 acts as the Proton donor in catalysis. Arg-144 and Asn-154 together coordinate ATP. 7 residues coordinate IMP: Arg-202, Asp-206, Lys-215, Thr-249, Asn-250, Ser-251, and Lys-292. Asp-351 contacts Mg(2+). Residues Gln-453 and Arg-456 each coordinate ATP. The interval 528–568 (ISEIKPPNLFPQKPQEITHCHDEDDDEEEEEEEEEEEEEEE) is disordered. The tract at residues 548–568 (HDEDDDEEEEEEEEEEEEEEE) is required for tetramer assembly. The span at 550–568 (EDDDEEEEEEEEEEEEEEE) shows a compositional bias: acidic residues.

Belongs to the 5'(3')-deoxyribonucleotidase family. As to quaternary structure, homotetramer. It depends on Mg(2+) as a cofactor.

It is found in the cytoplasm. Its subcellular location is the cytosol. The catalysed reaction is a ribonucleoside 5'-phosphate + H2O = a ribonucleoside + phosphate. It carries out the reaction a 2'-deoxyribonucleoside + a ribonucleoside 5'-phosphate = a ribonucleoside + a 2'-deoxyribonucleoside 5'-phosphate. It catalyses the reaction IMP + H2O = inosine + phosphate. The enzyme catalyses GMP + H2O = guanosine + phosphate. The catalysed reaction is dIMP + H2O = 2'-deoxyinosine + phosphate. It carries out the reaction dGMP + H2O = 2'-deoxyguanosine + phosphate. It catalyses the reaction XMP + H2O = xanthosine + phosphate. The enzyme catalyses inosine + GMP = guanosine + IMP. The catalysed reaction is dGMP + inosine = 2'-deoxyguanosine + IMP. It carries out the reaction dIMP + inosine = 2'-deoxyinosine + IMP. It catalyses the reaction inosine + UMP = uridine + IMP. The enzyme catalyses inosine + CMP = cytidine + IMP. The catalysed reaction is inosine + AMP = IMP + adenosine. With respect to regulation, allosterically activated by various compounds including ATP, 2,3-BPG/2,3-Bisphosphoglyceric acid and Ap4A/P1,P4-bis(5'-adenosyl) tetraphosphate. Binding of an allosteric activator is a prerequisiste to magnesium and substrate binding. Inhibited by inorganic phosphate. Its function is as follows. Broad specificity cytosolic 5'-nucleotidase that catalyzes the dephosphorylation of 6-hydroxypurine nucleoside 5'-monophosphates. In addition, possesses a phosphotransferase activity by which it can transfer a phosphate from a donor nucleoside monophosphate to an acceptor nucleoside, preferably inosine, deoxyinosine and guanosine. Has the highest activities for IMP and GMP followed by dIMP, dGMP and XMP. Could also catalyze the transfer of phosphates from pyrimidine monophosphates but with lower efficiency. Through these activities regulates the purine nucleoside/nucleotide pools within the cell. The polypeptide is Cytosolic purine 5'-nucleotidase (nt5c2) (Xenopus tropicalis (Western clawed frog)).